A 584-amino-acid polypeptide reads, in one-letter code: Ubiquitin-like-specific protease 1D (584 aa).

2 disordered regions span residues 28–64 (DKED…PKLL) and 99–323 (DLEE…QAAE). The segment covering 99–120 (DLEEEKQRRVLEGSKMEVDRSS) has biased composition (basic and acidic residues). The span at 121–132 (KVVSSTSSGSDV) shows a compositional bias: low complexity. Composition is skewed to basic and acidic residues over residues 142-165 (DTSR…KEVS) and 176-196 (PKTD…LGCE). Positions 197-207 (RRKHKAGRKPV) are enriched in basic residues. Over residues 221–253 (GKAEHSAKQFDSGLKESKGNKKSKEPYGKKRPM) the composition is skewed to basic and acidic residues. Acidic residues predominate over residues 261–274 (IDDDDDDDDDDDND). Residues 275–286 (TSGHETPREWSW) are compositionally biased toward basic and acidic residues. Active-site residues include His-438, Asp-461, and Cys-525.

Belongs to the peptidase C48 family.

The protein localises to the nucleus speckle. Its function is as follows. Protease that catalyzes two essential functions in the SUMO pathway: processing of full-length SUMOs to their mature forms and deconjugation of SUMO from targeted proteins. Cleaves precursors of SUM1 and SUM2, but not of SUM3 or SUM5. Able to release SUM1 and SUM2 from conjugates, but unable to cleave SUM3. Protease activity mainly directed at deconjugating SUM1 and SUM2 from their target proteins. Regulates salt stress responses and flowering time. Redundant with ULP1C. The chain is Ubiquitin-like-specific protease 1D (ULP1D) from Arabidopsis thaliana (Mouse-ear cress).